The sequence spans 313 residues: Mas-related G-protein coupled receptor member A4 (313 aa).

At 1 to 25 (MAPTTTNPMNETIPGSIDIETLIPN) the chain is on the extracellular side. Asn-10 carries N-linked (GlcNAc...) asparagine glycosylation. Residues 26–46 (LMIIIFGLVGLTGNVILFWLL) traverse the membrane as a helical segment. The Cytoplasmic segment spans residues 47–54 (GFHLHRNA). The helical transmembrane segment at 55 to 75 (FLVYILNLALADFLFLLCHII) threads the bilayer. Asn-76 carries N-linked (GlcNAc...) asparagine glycosylation. At 76 to 93 (NSTMLLLKVHLPNNILNH) the chain is on the extracellular side. The chain crosses the membrane as a helical span at residues 94–114 (CFDIIMTVLYITGLSMLSAIS). Residues 115-137 (TERCLSVLCPIWYRCRRPEHTST) are Cytoplasmic-facing. The helical transmembrane segment at 138-158 (VLCAVIWFLPLLICILNGYFC) threads the bilayer. The Extracellular segment spans residues 159–182 (HFFGPKYVIDSVCLATNFFIRTYP). The helical transmembrane segment at 183-203 (MFLFIVLCLSTLALLARLFCG) threads the bilayer. The Cytoplasmic portion of the chain corresponds to 204-219 (AGKTKFTRLFVTIMLT). A helical membrane pass occupies residues 220–240 (VLVFLLCGLPLGFFWFLVPWI). Topologically, residues 241-255 (NRDFSVLDYILFQTS) are extracellular. Residues 256–276 (LVLTSVNSCANPIIYFFVGSF) traverse the membrane as a helical segment. At 277–313 (RHRLKHKTLKMVLQSALQDTPETPENMVEMSRSKAEP) the chain is on the cytoplasmic side.

The protein belongs to the G-protein coupled receptor 1 family. Mas subfamily. As to expression, expressed in a subset of sensory neurons that includes nociceptors. Expressed in the subclass of non-peptidergic sensory neurons that are IB4(+) and VR1(-).

The protein localises to the cell membrane. In terms of biological role, orphan receptor. May be a receptor for RFamide-family neuropeptides such as NPFF and NPAF, which are analgesic in vivo. May regulate nociceptor function and/or development, including the sensation or modulation of pain. This chain is Mas-related G-protein coupled receptor member A4 (Mrgpra4), found in Mus musculus (Mouse).